The sequence spans 154 residues: MSNKTELRVEAIKNGTVIDHIPANIGVKVLKLFQMDKTAERVTIGLNLPSSALGSKDLLKIENTFVTPEQASKLALYAPHATVNQIENYEVVKKIPLILPKQITGVFECPNSNCITHGEPVDSSFKVIAKKGNIHLKCKYCEKVYSQEVVTDLH.

Residues Cys-109, Cys-114, Cys-138, and Cys-141 each contribute to the Zn(2+) site.

This sequence belongs to the PyrI family. Contains catalytic and regulatory chains. It depends on Zn(2+) as a cofactor.

Its function is as follows. Involved in allosteric regulation of aspartate carbamoyltransferase. This Aliivibrio salmonicida (strain LFI1238) (Vibrio salmonicida (strain LFI1238)) protein is Aspartate carbamoyltransferase regulatory chain.